The following is a 384-amino-acid chain: Substance-K receptor (384 aa).

Residues 1-32 (MGAHAIVTDANISSSLENNTTGITAFSMPGWQ) lie on the Extracellular side of the membrane. N-linked (GlcNAc...) asparagine glycans are attached at residues Asn11, Asn18, and Asn19. A helical membrane pass occupies residues 33-56 (LALWATAYLVLVLVAVTGNATVIW). The Cytoplasmic segment spans residues 57-69 (IILAHQRMRTVTN). Residues 70-90 (YFIVNLALADLCMAAFNAAFN) form a helical membrane-spanning segment. Over 91-107 (FVYASHNIWYFGRAFCH) the chain is Extracellular. Cys106 and Cys181 are oxidised to a cystine. Residues 108–129 (FQNLFPITAMFVSIYSMTAIAA) form a helical membrane-spanning segment. Residues 130–149 (DRYVAIVHPFQPRLSAPGTR) lie on the Cytoplasmic side of the membrane. The helical transmembrane segment at 150–170 (AVIAGIWLLALALAFPQCFYS) threads the bilayer. The Extracellular segment spans residues 171 to 196 (TITMDQGATKCVVVWPEDNGSKMLLL). A helical membrane pass occupies residues 197–218 (YHLVVIALIYVLPLLVMLLAYS). The Cytoplasmic portion of the chain corresponds to 219 to 251 (VIGLTLWRREVPRHQVHGASLRHLRAKKKFVKT). The chain crosses the membrane as a helical span at residues 252-272 (MVLVVVTFAICWLPYHFYFIL). Residues 273–290 (GSFQEDIYYHKFIQQVYL) lie on the Extracellular side of the membrane. Residues 291–310 (ALFWLAMSSTMYNPIIYCCL) traverse the membrane as a helical segment. Topologically, residues 311-384 (NHRFRSGFRL…GPQDGLPDEP (74 aa)) are cytoplasmic. Cys324 carries the S-palmitoyl cysteine lipid modification.

It belongs to the G-protein coupled receptor 1 family.

Its subcellular location is the cell membrane. Its function is as follows. This is a receptor for the tachykinin neuropeptide substance K (neurokinin A). It is associated with G proteins that activate a phosphatidylinositol-calcium second messenger system. The sequence is that of Substance-K receptor (TACR2) from Canis lupus familiaris (Dog).